Consider the following 2542-residue polypeptide: Probable polyketide synthase 41 (2542 aa).

The Ketosynthase family 3 (KS3) domain maps to 11–441 (CNKVAIIGIG…GSNCCLIVSS (431 aa)). Active-site for beta-ketoacyl synthase activity residues include Cys-177, His-318, and His-360. Residues 628 to 661 (GIKPSIIVGHSLGEISSSYCSGMIDLDTFCYLIY) form an acyl/malonyl transferase region. Ser-638 (for acyl/malonyl transferase activity) is an active-site residue. Residues 926 to 1059 (INHLGISNSN…ANFQLFSRGP (134 aa)) are N-terminal hotdog fold. The region spanning 926 to 1231 (INHLGISNSN…FKSTTKIKDP (306 aa)) is the PKS/mFAS DH domain. His-959 acts as the Proton acceptor; for dehydratase activity in catalysis. A C-terminal hotdog fold region spans residues 1083–1231 (NLTKLSKQEL…FKSTTKIKDP (149 aa)). Catalysis depends on Asp-1145, which acts as the Proton donor; for dehydratase activity. In terms of domain architecture, Carrier spans 2459 to 2537 (NVELTVDQLI…SFIQLVKNSM (79 aa)). Residue Ser-2496 is modified to O-(pantetheine 4'-phosphoryl)serine.

The cofactor is pantetheine 4'-phosphate.

In terms of biological role, probable polyketide synthase. This is Probable polyketide synthase 41 (pks41) from Dictyostelium discoideum (Social amoeba).